The chain runs to 353 residues: Peptide-N(4)-(N-acetyl-beta-glucosaminyl)asparagine amidase (353 aa).

Residues Cys-125, Cys-128, and Cys-159 each coordinate Zn(2+). Cys-185 functions as the Nucleophile in the catalytic mechanism. Active-site residues include His-212 and Asp-229. Position 232 (Glu-232) interacts with substrate. The segment at 316-353 (SLEKTKPSKDTSTTTLTGTKGRESGSTAWKQQRGEDGS) is disordered. The segment covering 325 to 334 (DTSTTTLTGT) has biased composition (low complexity).

This sequence belongs to the transglutaminase-like superfamily. PNGase family. It depends on Zn(2+) as a cofactor.

It is found in the cytoplasm. The enzyme catalyses Hydrolysis of an N(4)-(acetyl-beta-D-glucosaminyl)asparagine residue in which the glucosamine residue may be further glycosylated, to yield a (substituted) N-acetyl-beta-D-glucosaminylamine and a peptide containing an aspartate residue.. Functionally, specifically deglycosylates the denatured form of N-linked glycoproteins in the cytoplasm and assists their proteasome-mediated degradation. Cleaves the beta-aspartyl-glucosamine (GlcNAc) of the glycan and the amide side chain of Asn, converting Asn to Asp. Prefers proteins containing high-mannose over those bearing complex type oligosaccharides. Can recognize misfolded proteins in the endoplasmic reticulum that are exported to the cytosol to be destroyed and deglycosylate them, while it has no activity toward native proteins. Deglycosylation is a prerequisite for subsequent proteasome-mediated degradation of some, but not all, misfolded glycoproteins. In Kluyveromyces lactis (strain ATCC 8585 / CBS 2359 / DSM 70799 / NBRC 1267 / NRRL Y-1140 / WM37) (Yeast), this protein is Peptide-N(4)-(N-acetyl-beta-glucosaminyl)asparagine amidase (PNG1).